We begin with the raw amino-acid sequence, 240 residues long: Ribonuclease HII (240 aa).

In terms of domain architecture, RNase H type-2 spans 29–220 (EPIAGVDEAG…VRRAAGLEPL (192 aa)). The a divalent metal cation site is built by aspartate 35, glutamate 36, and aspartate 129.

Belongs to the RNase HII family. The cofactor is Mn(2+). It depends on Mg(2+) as a cofactor.

The protein resides in the cytoplasm. It carries out the reaction Endonucleolytic cleavage to 5'-phosphomonoester.. Functionally, endonuclease that specifically degrades the RNA of RNA-DNA hybrids. This Nocardioides sp. (strain ATCC BAA-499 / JS614) protein is Ribonuclease HII.